Consider the following 629-residue polypeptide: Arginine--tRNA ligase (629 aa).

The short motif at 128-138 (VNPTKPLHMGH) is the 'HIGH' region element.

This sequence belongs to the class-I aminoacyl-tRNA synthetase family.

Its subcellular location is the cytoplasm. The enzyme catalyses tRNA(Arg) + L-arginine + ATP = L-arginyl-tRNA(Arg) + AMP + diphosphate. The sequence is that of Arginine--tRNA ligase (argS) from Pyrococcus horikoshii (strain ATCC 700860 / DSM 12428 / JCM 9974 / NBRC 100139 / OT-3).